We begin with the raw amino-acid sequence, 511 residues long: Cytochrome P450 77A2 (511 aa).

Cys-456 contacts heme.

This sequence belongs to the cytochrome P450 family. The cofactor is heme.

The sequence is that of Cytochrome P450 77A2 (CYP77A2) from Solanum melongena (Eggplant).